A 124-amino-acid polypeptide reads, in one-letter code: Large ribosomal subunit protein bL12 (124 aa).

It belongs to the bacterial ribosomal protein bL12 family. Homodimer. Part of the ribosomal stalk of the 50S ribosomal subunit. Forms a multimeric L10(L12)X complex, where L10 forms an elongated spine to which 2 to 4 L12 dimers bind in a sequential fashion. Binds GTP-bound translation factors.

In terms of biological role, forms part of the ribosomal stalk which helps the ribosome interact with GTP-bound translation factors. Is thus essential for accurate translation. The sequence is that of Large ribosomal subunit protein bL12 from Brucella anthropi (strain ATCC 49188 / DSM 6882 / CCUG 24695 / JCM 21032 / LMG 3331 / NBRC 15819 / NCTC 12168 / Alc 37) (Ochrobactrum anthropi).